Here is a 449-residue protein sequence, read N- to C-terminus: Bifunctional protein GlmU (449 aa).

The pyrophosphorylase stretch occupies residues 1–229 (MKLSAVILAA…EEDIYGINDR (229 aa)). UDP-N-acetyl-alpha-D-glucosamine is bound by residues 8 to 11 (LAAG), Lys22, Gln73, and 78 to 79 (GT). Asp102 provides a ligand contact to Mg(2+). 4 residues coordinate UDP-N-acetyl-alpha-D-glucosamine: Gly139, Glu154, Asn169, and Asn227. Mg(2+) is bound at residue Asn227. Residues 230 to 250 (VQLAQAENILRQRKNRELMLS) are linker. The tract at residues 251 to 449 (GVSLMDPAST…AGQKHLPRKG (199 aa)) is N-acetyltransferase. UDP-N-acetyl-alpha-D-glucosamine contacts are provided by Arg332 and Lys350. Residue His362 is the Proton acceptor of the active site. The UDP-N-acetyl-alpha-D-glucosamine site is built by Tyr365 and Asn376. Acetyl-CoA is bound by residues Ala379, 385 to 386 (NY), Ser404, Ala422, and Arg439.

The protein in the N-terminal section; belongs to the N-acetylglucosamine-1-phosphate uridyltransferase family. In the C-terminal section; belongs to the transferase hexapeptide repeat family. As to quaternary structure, homotrimer. The cofactor is Mg(2+).

It is found in the cytoplasm. It carries out the reaction alpha-D-glucosamine 1-phosphate + acetyl-CoA = N-acetyl-alpha-D-glucosamine 1-phosphate + CoA + H(+). The catalysed reaction is N-acetyl-alpha-D-glucosamine 1-phosphate + UTP + H(+) = UDP-N-acetyl-alpha-D-glucosamine + diphosphate. It functions in the pathway nucleotide-sugar biosynthesis; UDP-N-acetyl-alpha-D-glucosamine biosynthesis; N-acetyl-alpha-D-glucosamine 1-phosphate from alpha-D-glucosamine 6-phosphate (route II): step 2/2. It participates in nucleotide-sugar biosynthesis; UDP-N-acetyl-alpha-D-glucosamine biosynthesis; UDP-N-acetyl-alpha-D-glucosamine from N-acetyl-alpha-D-glucosamine 1-phosphate: step 1/1. The protein operates within bacterial outer membrane biogenesis; LPS lipid A biosynthesis. Functionally, catalyzes the last two sequential reactions in the de novo biosynthetic pathway for UDP-N-acetylglucosamine (UDP-GlcNAc). The C-terminal domain catalyzes the transfer of acetyl group from acetyl coenzyme A to glucosamine-1-phosphate (GlcN-1-P) to produce N-acetylglucosamine-1-phosphate (GlcNAc-1-P), which is converted into UDP-GlcNAc by the transfer of uridine 5-monophosphate (from uridine 5-triphosphate), a reaction catalyzed by the N-terminal domain. This chain is Bifunctional protein GlmU, found in Syntrophomonas wolfei subsp. wolfei (strain DSM 2245B / Goettingen).